The primary structure comprises 163 residues: MMKLENKLHRVLCSLHQNSISTHKTYVAVAAQDEYVRMGKVSLPRMYAVKPRIQKNFQDNYRFYGTLLCICWLYFFIWYPFALLALMVGVFLSFVMHGLGSLTINQNIRLDPKYSIPGVCAVTLIVIMFLAPVGRLFWSFCIVSSFAGLHCLLTTYENPAGIL.

The next 4 membrane-spanning stretches (helical) occupy residues 61–78, 82–104, 114–134, and 136–156; these read YRFYGTLLCICWLYFFIW, ALLALMVGVFLSFVMHGLGSLTI, YSIPGVCAVTLIVIMFLAPVG, and LFWSFCIVSSFAGLHCLLTTY.

Its subcellular location is the membrane. In terms of biological role, has a role in meiosis. In Schizosaccharomyces pombe (strain 972 / ATCC 24843) (Fission yeast), this protein is Meiotically up-regulated gene 109 protein (mug109).